The primary structure comprises 230 residues: 7-cyano-7-deazaguanine synthase (230 aa).

ATP is bound at residue 8–18 (LSGGMDSAVVT). Cys186, Cys196, Cys199, and Cys202 together coordinate Zn(2+).

Belongs to the QueC family. Requires Zn(2+) as cofactor.

It catalyses the reaction 7-carboxy-7-deazaguanine + NH4(+) + ATP = 7-cyano-7-deazaguanine + ADP + phosphate + H2O + H(+). It functions in the pathway purine metabolism; 7-cyano-7-deazaguanine biosynthesis. In terms of biological role, catalyzes the ATP-dependent conversion of 7-carboxy-7-deazaguanine (CDG) to 7-cyano-7-deazaguanine (preQ(0)). This is 7-cyano-7-deazaguanine synthase from Xylella fastidiosa (strain M23).